We begin with the raw amino-acid sequence, 147 residues long: Large ribosomal subunit protein uL15 (147 aa).

The interval 1 to 55 is disordered; it reads MKLHEIAPQPGSTKRRRRVGRGVSAGQGASCGLGMRGQKSRSGTGTRPGFEGGQM. A compositionally biased stretch (gly residues) spans 23–35; the sequence is VSAGQGASCGLGM.

It belongs to the universal ribosomal protein uL15 family. As to quaternary structure, part of the 50S ribosomal subunit.

Binds to the 23S rRNA. In Microcystis aeruginosa (strain NIES-843 / IAM M-2473), this protein is Large ribosomal subunit protein uL15.